Here is a 359-residue protein sequence, read N- to C-terminus: Transcription elongation factor A N-terminal and central domain-containing protein (359 aa).

Residues 1–82 (MSDKNQIIAR…AKWRGFYKST (82 aa)) form the TFIIS N-terminal domain. The disordered stretch occupies residues 84–118 (CKPRQSPKVLHTNANKEESAAVSQDVSQDETSGSS). Over residues 104-118 (AVSQDVSQDETSGSS) the composition is skewed to polar residues. The TFIIS central domain occupies 182–298 (VRSKCVELLY…EHCLPQSVDG (117 aa)).

The sequence is that of Transcription elongation factor A N-terminal and central domain-containing protein (Tceanc) from Mus musculus (Mouse).